The following is a 425-amino-acid chain: Glucan 1,3-beta-glucosidase (425 aa).

Residues 1–17 (MLLTFAPIFLLISSIVA) form the signal peptide. Glu-214 functions as the Proton donor in the catalytic mechanism. 2 cysteine pairs are disulfide-bonded: Cys-301–Cys-423 and Cys-326–Cys-352. Lys-328 functions as the Nucleophile in the catalytic mechanism.

This sequence belongs to the glycosyl hydrolase 5 (cellulase A) family.

The protein resides in the secreted. It catalyses the reaction Successive hydrolysis of beta-D-glucose units from the non-reducing ends of (1-&gt;3)-beta-D-glucans, releasing alpha-glucose.. Functionally, beta-glucanases participate in the metabolism of beta-glucan, the main structural component of the cell wall. It could also function biosynthetically as a transglycosylase. The sequence is that of Glucan 1,3-beta-glucosidase (EXG1) from Candida oleophila (Yeast).